Reading from the N-terminus, the 867-residue chain is Probable potassium transporter 15 (867 aa).

A compositionally biased stretch (low complexity) spans 1–13 (MAASSSSSASASA). A disordered region spans residues 1–88 (MAASSSSSAS…EGEGEDGEKQ (88 aa)). Residues 1–124 (MAASSSSSAS…DSEEFDFGRT (124 aa)) lie on the Cytoplasmic side of the membrane. Residues 32 to 44 (TEEDDEGEEDGDT) show a composition bias toward acidic residues. Residues 45 to 54 (VEAAAAAVGA) show a composition bias toward low complexity. Over residues 63-84 (SEEEEDEEDGGGGGEGEGEGED) the composition is skewed to acidic residues. A helical membrane pass occupies residues 125 to 145 (MFLALQTLAVVFGDIGISPLY). At 146–167 (TFDVMFSKYPILGEEDVLGALS) the chain is on the extracellular side. Residues 168–188 (LVLYTLISMPLVKYVLVVLWA) form a helical membrane-spanning segment. Residues 189 to 252 (NDDGEGGIFA…KLESSLLLKK (64 aa)) lie on the Cytoplasmic side of the membrane. The helical transmembrane segment at 253–273 (LLLGLVLFGTAMFISNGVITP) threads the bilayer. Residues 274–285 (AMSVLSAVSGLK) lie on the Extracellular side of the membrane. Residues 286 to 306 (VGIPNASQGLVVMISVVLLVI) form a helical membrane-spanning segment. Topologically, residues 307-317 (LYSVQRYATSK) are cytoplasmic. The chain crosses the membrane as a helical span at residues 318–338 (MGFALGPSLLIWFCCLGGIGI). Residues 339–365 (YNLSTYGPAAFKAFNPLYIIYYFGRNP) lie on the Extracellular side of the membrane. A glycan (N-linked (GlcNAc...) asparagine) is linked at N340. The chain crosses the membrane as a helical span at residues 366–386 (FQAWLSLAGCLLCATGSEAIF). The Cytoplasmic portion of the chain corresponds to 387-400 (ANLSYFPVRYVQSM). A helical membrane pass occupies residues 401–421 (FALLVLPCLVLAYLGQGAFLI). Topologically, residues 422–433 (ANQNSSEQIFFS) are extracellular. N425 carries N-linked (GlcNAc...) asparagine glycosylation. The helical transmembrane segment at 434–454 (SIPSGVFWPVFLIANLAALIA) threads the bilayer. The Cytoplasmic portion of the chain corresponds to 455-490 (SRTMTTAIFQCLKQSIALGCFPRLKIIHTSRKFMAK). The helical transmembrane segment at 491–511 (IYIPVVNWFLLFSCLGFILLF) threads the bilayer. At 512–522 (RSIYDVGNAYA) the chain is on the extracellular side. A helical transmembrane segment spans residues 523–543 (IAELGVMIMATVYVTIIMLLI). Residues 544–545 (WE) lie on the Cytoplasmic side of the membrane. The chain crosses the membrane as a helical span at residues 546–566 (TSIVKVLSFVITFLSLELVFF). Over 567–572 (SSSLSS) the chain is Extracellular. The chain crosses the membrane as a helical span at residues 573–593 (VGDGGWALIIFASGILMVMFI). The Cytoplasmic portion of the chain corresponds to 594 to 867 (WNYGSKLKYD…VMQVRLTSYV (274 aa)).

The protein belongs to the HAK/KUP transporter (TC 2.A.72.3) family.

It localises to the membrane. Functionally, high-affinity potassium transporter. This is Probable potassium transporter 15 (HAK15) from Oryza sativa subsp. japonica (Rice).